A 415-amino-acid polypeptide reads, in one-letter code: Probable G-protein coupled receptor 19 (415 aa).

The Extracellular segment spans residues 1-69 (MGFDHRMETD…LNPGEVATAS (69 aa)). Asn-25 and Asn-52 each carry an N-linked (GlcNAc...) asparagine glycan. The helical transmembrane segment at 70 to 90 (IFFGALWLFSIFGNSLVCLVI) threads the bilayer. Residues 91–102 (HRSRRTQSTTNY) lie on the Cytoplasmic side of the membrane. Residues 103 to 123 (FVVSMACADLLISVASTPFVV) traverse the membrane as a helical segment. Topologically, residues 124–152 (LQFTTGRWTLGSAMCKVVRYFQYLTPGVQ) are extracellular. Cys-138 and Cys-210 are joined by a disulfide. The chain crosses the membrane as a helical span at residues 153 to 173 (IYVLLSICIDRFYTIVYPLSF). Topologically, residues 174–182 (KVSREKAKR) are cytoplasmic. The helical transmembrane segment at 183 to 203 (MIAASWILDAAFVTPVFFFYG) threads the bilayer. Over 204–221 (SNWDSHCNYFLPPSWEGT) the chain is Extracellular. The helical transmembrane segment at 222 to 242 (AYTVIHFLVGFVIPSVLIILF) threads the bilayer. The Cytoplasmic portion of the chain corresponds to 243–277 (YQKVIKYIWRIGTDGRTLRRTMNIVPRTKVKTVKM). A helical transmembrane segment spans residues 278 to 298 (FLLLNLVFLFSWLPFHVAQLW). Residues 299 to 309 (HPHEQDYRKSS) are Extracellular-facing. Residues 310–332 (LVFTAVTWVSFSSSASKPTLYSI) traverse the membrane as a helical segment. Over 333 to 415 (YNANFRRGMK…INSNPPNTFV (83 aa)) the chain is Cytoplasmic.

Belongs to the G-protein coupled receptor 1 family. As to expression, abundant expression in the brain.

The protein localises to the cell membrane. G-protein coupled receptor that plays a role in the regulation of circadian rhythms and energy metabolism. Participates in maintaining proper circadian gene expression in the suprachiasmatic nucleus (SCN), the locus of the master circadian clock in the brain. May function as a coordinator of aging-associated metabolic dysfunction, stress response, DNA integrity management, and eventual senescence. Upon binding to adropin, modulates mitochondrial energy metabolism via the p44/42-PDK4 signaling pathway, influencing pyruvate dehydrogenase activity. In Rattus norvegicus (Rat), this protein is Probable G-protein coupled receptor 19 (Gpr19).